A 266-amino-acid polypeptide reads, in one-letter code: MNKVKVGDAQVSYCIDGKGPGLVLVHGTGGDSETNWGHLMPALTNDWTVVRPDYSGSGITSDEGKQLEVKEIAAQVVAAAEAARVVPFDLVGFSLGSAVVIAIAADYPHLVRRIVLLGAFLSSRDIRQKTQFELWRDLIRTDRAALSRLILLTGFSPDFISKQGHDGVSVIINSFVSEINWEGMARQVELDLSIDVSEAARRIEKPTLVIGCSHDHIVPSSQAKSVVRIIRGAQYTELHTGHLAHIENPEEFILLLRSFLLSEDVP.

Threonine 28 is a binding site for acetate. Serine 94 functions as the Nucleophile in the catalytic mechanism. Leucine 95 provides a ligand contact to acetate. Catalysis depends on charge relay system residues aspartate 215 and histidine 242. Histidine 242 lines the acetate pocket.

This sequence belongs to the AB hydrolase superfamily. As to quaternary structure, homodimer.

It catalyses the reaction pyrrolizixenacetamide + H2O = 3-amino-5,6,7,7a-tetrahydro-1H-pyrrolizin-1-one + acetate + H(+). Functionally, involved in the biosynthetic pathway of pyrrolizwilline, a pyrrolizidine alkaloid. Catalyzes the N-deacetylation of pyrrolizixenacetamide. The chain is Pyrrolizixenacetamide deacetylase from Xenorhabdus hominickii.